The following is a 701-amino-acid chain: MSQEVLEDLAKVRNIGIMAHIDAGKTTTTERILFYTGITHKIGEVHDGAAAMDWMAQEQERGITITSAATTCFWGGNQINIIDTPGHVDFTVEVERSLRVLDGAVAVFDGKEGVEPQSETVWRQADKYKVPRICFVNKMDKIGADFHFTVKTVVDRLGATPLVIQLPIGSESTFEGVIDLVEMRALTWRGDAKGDVKMGAEYAVEPIPEDLKQQADEFRQKLIETVAENDEALLEKFFSGEEITVAELKSAIRRLTVSGSLYPILCGSSFKNRGVQPMLDAVVDYLPSPLDVPPVNGVDADNPQERLADVSQPFSALAFKVAVHPFFGRLTYIRVYSGTLPAGSQIVNSTKSRKERFGKVFQMHSNKENPVPKMSAGHIYAVIGLKYTTTGDTLCDQDNPIILESMTFPDPVIEVAIEPKTKADQEKLSLAIQRLAEEDPTFKTEQNPETGQTVIKGMGELHLDILVDRMRREFNVEANVGTPQVAYRETIRRTVEKHEYTHKKQTGGAGQFARVIITLEPLEVTGEKTYDFVDTVTGGRIPKEYIPSVDAGIRDAMQVGVLAGYPTVGIKATLVDGAYHDVDSSEMAFRIAGSQAFKEASRRADPTLLEPIMSVEVRTPDEYMGDVIGDLNSRRGHIQSMQDSSGIKVIQARVPLSEMFGYIGDLRSKTSGRAVYSMTFDGYAEAPKSVTEEVVRKARGE.

The 281-residue stretch at 10–290 (AKVRNIGIMA…AVVDYLPSPL (281 aa)) folds into the tr-type G domain. GTP-binding positions include 19-26 (AHIDAGKT), 83-87 (DTPGH), and 137-140 (NKMD).

It belongs to the TRAFAC class translation factor GTPase superfamily. Classic translation factor GTPase family. EF-G/EF-2 subfamily.

The protein resides in the cytoplasm. Its function is as follows. Catalyzes the GTP-dependent ribosomal translocation step during translation elongation. During this step, the ribosome changes from the pre-translocational (PRE) to the post-translocational (POST) state as the newly formed A-site-bound peptidyl-tRNA and P-site-bound deacylated tRNA move to the P and E sites, respectively. Catalyzes the coordinated movement of the two tRNA molecules, the mRNA and conformational changes in the ribosome. In Tropheryma whipplei (strain TW08/27) (Whipple's bacillus), this protein is Elongation factor G.